A 302-amino-acid chain; its full sequence is Ventral anterior homeobox 2a (302 aa).

5 disordered regions span residues 1–35 (MFDQ…RDKG), 50–73 (KDIP…SQST), 156–175 (RRTK…SSST), 199–223 (PPNL…LGTS), and 282–302 (AFEP…KSTS). Residues 105-164 (PKRTRTSFTAEQLYRLELEFQRCQYVVGRERTELARQLNLSETQVKVWFQNRRTKQKKDQ) constitute a DNA-binding region (homeobox). Residues 161–172 (KKDQSRDSEKRS) are compositionally biased toward basic and acidic residues. The span at 204-223 (SSSQNNMGTSSGNGTNLGTS) shows a compositional bias: low complexity. Basic and acidic residues predominate over residues 287-296 (TRLDRKDTAS).

This sequence belongs to the EMX homeobox family.

It localises to the nucleus. Transcription factor that may function in dorsoventral specification of the forebrain. Regulates the expression of Wnt signaling antagonists including the expression of a truncated tcf7l2 isoform that cannot bind ctnnb1 and acts therefore as a potent dominant-negative Wnt antagonist. Plays a crucial role in eye development and, in particular, in the specification of the ventral optic vesicle. May be a regulator of axial polarization in the retina. This chain is Ventral anterior homeobox 2a (vax2-a), found in Xenopus laevis (African clawed frog).